The primary structure comprises 137 residues: uncharacterized protein (137 aa).

This is an uncharacterized protein from Saccharomyces cerevisiae (strain ATCC 204508 / S288c) (Baker's yeast).